A 704-amino-acid chain; its full sequence is Elongation factor G (704 aa).

The 284-residue stretch at 8 to 291 (DKVRNIGIMA…AVVEYLASPV (284 aa)) folds into the tr-type G domain. GTP-binding positions include 17-24 (AHIDAGKT), 90-94 (DTPGH), and 144-147 (NKMD).

The protein belongs to the TRAFAC class translation factor GTPase superfamily. Classic translation factor GTPase family. EF-G/EF-2 subfamily.

The protein localises to the cytoplasm. Functionally, catalyzes the GTP-dependent ribosomal translocation step during translation elongation. During this step, the ribosome changes from the pre-translocational (PRE) to the post-translocational (POST) state as the newly formed A-site-bound peptidyl-tRNA and P-site-bound deacylated tRNA move to the P and E sites, respectively. Catalyzes the coordinated movement of the two tRNA molecules, the mRNA and conformational changes in the ribosome. The sequence is that of Elongation factor G from Chlorobium phaeobacteroides (strain DSM 266 / SMG 266 / 2430).